Here is a 202-residue protein sequence, read N- to C-terminus: Xanthine phosphoribosyltransferase (202 aa).

L20 and N27 together coordinate xanthine. Residue 128–132 (ASGGT) participates in 5-phospho-alpha-D-ribose 1-diphosphate binding. Position 156 (K156) interacts with xanthine.

Belongs to the purine/pyrimidine phosphoribosyltransferase family. Xpt subfamily. As to quaternary structure, homodimer.

It is found in the cytoplasm. The catalysed reaction is XMP + diphosphate = xanthine + 5-phospho-alpha-D-ribose 1-diphosphate. It participates in purine metabolism; XMP biosynthesis via salvage pathway; XMP from xanthine: step 1/1. Converts the preformed base xanthine, a product of nucleic acid breakdown, to xanthosine 5'-monophosphate (XMP), so it can be reused for RNA or DNA synthesis. The chain is Xanthine phosphoribosyltransferase from Deinococcus geothermalis (strain DSM 11300 / CIP 105573 / AG-3a).